The sequence spans 514 residues: 2,3-bisphosphoglycerate-independent phosphoglycerate mutase (514 aa).

Residues D14 and S64 each coordinate Mn(2+). S64 acts as the Phosphoserine intermediate in catalysis. Substrate-binding positions include H125, 155-156 (RD), R187, R193, 263-266 (RADR), and K336. 5 residues coordinate Mn(2+): D403, H407, D444, H445, and H463.

Belongs to the BPG-independent phosphoglycerate mutase family. As to quaternary structure, monomer. The cofactor is Mn(2+).

It catalyses the reaction (2R)-2-phosphoglycerate = (2R)-3-phosphoglycerate. It participates in carbohydrate degradation; glycolysis; pyruvate from D-glyceraldehyde 3-phosphate: step 3/5. Functionally, catalyzes the interconversion of 2-phosphoglycerate and 3-phosphoglycerate. The sequence is that of 2,3-bisphosphoglycerate-independent phosphoglycerate mutase from Shewanella sp. (strain MR-7).